A 386-amino-acid polypeptide reads, in one-letter code: MANEYIFTSESVTEGHPDKMADQISDAILDYIIERDPQARVACETLLSNGFCVIAGELKTAAYAPMQEIAREVVREIGYTDAAYGFDYRSAGVLNGIGEQSPDINVGVDQKGGEIGAGDQGLMFGYACKETKELMPLPISLAHHITRKLAAVRKNGTVPFLRPDGKAQVSVKYVDGKPVAVDTIVVSTQHHETVSLEQVQKAVKEEVIDPVLATYDIDISDITYHINPTGRFVIGGPQGDAGLTGRKIIVDTYGGSCPHGGGAFSGKDPTKVDRSAAYAARYVAKNLVAAGACDKATLQVAYAIGVAKPVSIYVDTHGTAHIDEEKIVSCVESLFDLTPKGIIDSLDLLKPIYKKTAAYGHFGREDMGFSWEKIDKVDEIKAFLGL.

His-16 serves as a coordination point for ATP. Mg(2+) is bound at residue Asp-18. Glu-44 serves as a coordination point for K(+). L-methionine is bound by residues Glu-57 and Gln-100. Residues 100-110 (QSPDINVGVDQ) form a flexible loop region. ATP is bound by residues 164 to 166 (DGK), 231 to 232 (RF), Asp-240, 246 to 247 (RK), Ala-263, and Lys-267. Asp-240 lines the L-methionine pocket. Lys-271 contacts L-methionine.

This sequence belongs to the AdoMet synthase family. Homotetramer; dimer of dimers. It depends on Mg(2+) as a cofactor. K(+) serves as cofactor.

The protein localises to the cytoplasm. It carries out the reaction L-methionine + ATP + H2O = S-adenosyl-L-methionine + phosphate + diphosphate. Its pathway is amino-acid biosynthesis; S-adenosyl-L-methionine biosynthesis; S-adenosyl-L-methionine from L-methionine: step 1/1. Functionally, catalyzes the formation of S-adenosylmethionine (AdoMet) from methionine and ATP. The overall synthetic reaction is composed of two sequential steps, AdoMet formation and the subsequent tripolyphosphate hydrolysis which occurs prior to release of AdoMet from the enzyme. The protein is S-adenosylmethionine synthase of Sulfurovum sp. (strain NBC37-1).